Consider the following 98-residue polypeptide: Lactococcin-A immunity protein (98 aa).

Functionally, imparts immunity to lactococcin-A to naturally sensitive host strains. The polypeptide is Lactococcin-A immunity protein (lciA) (Lactococcus lactis subsp. cremoris (Streptococcus cremoris)).